A 279-amino-acid chain; its full sequence is Pantothenate synthetase (279 aa).

Residue 27-34 coordinates ATP; sequence MGYLHEGH. The Proton donor role is filled by H34. Q58 contributes to the (R)-pantoate binding site. Q58 lines the beta-alanine pocket. 144 to 147 is an ATP binding site; sequence GKKD. Q150 provides a ligand contact to (R)-pantoate. ATP is bound by residues V173 and 181-184; that span reads MSSR.

Belongs to the pantothenate synthetase family. Homodimer.

The protein resides in the cytoplasm. The enzyme catalyses (R)-pantoate + beta-alanine + ATP = (R)-pantothenate + AMP + diphosphate + H(+). It participates in cofactor biosynthesis; (R)-pantothenate biosynthesis; (R)-pantothenate from (R)-pantoate and beta-alanine: step 1/1. Functionally, catalyzes the condensation of pantoate with beta-alanine in an ATP-dependent reaction via a pantoyl-adenylate intermediate. In Geobacter sp. (strain M21), this protein is Pantothenate synthetase.